Reading from the N-terminus, the 514-residue chain is Pleiotropic regulator 1 (514 aa).

The residue at position 1 (methionine 1) is an N-acetylmethionine. A Phosphoserine modification is found at serine 119. The segment at lysine 135 to threonine 160 is disordered. Serine 201 is modified (phosphoserine). 7 WD repeats span residues glycine 202–serine 241, glycine 244–histidine 283, glycine 286–threonine 325, glycine 328–threonine 367, asparagine 370–serine 410, glycine 411–arginine 449, and aspartate 460–threonine 499. Serine 391 bears the Phosphoserine mark.

The protein belongs to the WD repeat PRL1/PRL2 family. Identified in the spliceosome C complex. Component of the PRP19-CDC5L splicing complex composed of a core complex comprising a homotetramer of PRPF19, CDC5L, PLRG1 and BCAS2, and at least three less stably associated proteins CTNNBL1, CWC15 and HSPA8. Interacts (via its WD40 repeat domain) directly with CDC5L (via its C-terminal); the interaction is required for mRNA splicing but not for spliceosome assembly. Component of the minor spliceosome, which splices U12-type introns. Within this complex, interacts with CRIPT. Also interacts directly in the complex with BCAS2 and PRPF19. Interacts with USB1.

It is found in the nucleus. The protein localises to the nucleus speckle. In terms of biological role, involved in pre-mRNA splicing as component of the spliceosome. Component of the PRP19-CDC5L complex that forms an integral part of the spliceosome and is required for activating pre-mRNA splicing. As a component of the minor spliceosome, involved in the splicing of U12-type introns in pre-mRNAs. This Homo sapiens (Human) protein is Pleiotropic regulator 1 (PLRG1).